The sequence spans 371 residues: Collectin-46 (371 aa).

The signal sequence occupies residues 1-20; it reads MLLLPLSVLLLLTQPWRSLG. The interval 43-215 is disordered; the sequence is PEGGLPGRDG…ERGAKGESGL (173 aa). Positions 46–216 constitute a Collagen-like domain; it reads GLPGRDGQDG…RGAKGESGLA (171 aa). Basic and acidic residues predominate over residues 51–65; it reads DGQDGREGPQGEKGD. N-linked (GlcNAc...) asparagine glycosylation occurs at N90. A compositionally biased stretch (low complexity) spans 113-128; it reads PAGREGPSGKQGSMGP. The span at 139-148 shows a compositional bias: gly residues; that stretch reads GPKGGMGAPG. Positions 170-191 are enriched in low complexity; the sequence is APGSAGVAGPAGAIGPQGPSGA. Basic and acidic residues predominate over residues 198 to 210; it reads KGDRGDPGERGAK. A Cell attachment site motif is present at residues 201–203; sequence RGD. The region spanning 273-371 is the C-type lectin domain; that stretch reads QLCREAKGQL…SEPLLVICEF (99 aa). Intrachain disulfides connect C275–C369 and C347–C361.

This sequence belongs to the SFTPD family. Oligomeric complex of 4 set of homotrimers. In terms of processing, hydroxylated. In terms of tissue distribution, highly expressed in thymus and liver.

The protein localises to the secreted. This chain is Collectin-46 (CL46), found in Bos taurus (Bovine).